A 111-amino-acid chain; its full sequence is MMYLLIFLVSLLSCAGQLCQKHAAGASSGAGELRHRVRWLAISLLLLGGAMLVWLWVLQRVPVGIAYPMFSLNFVLVTLAARWLWREPVSLRHGCGLLLIVAGVMCMGVNL.

The next 3 helical transmembrane spans lie at 39 to 59, 61 to 81, and 89 to 109; these read WLAI…WVLQ, VPVG…TLAA, and VSLR…CMGV. An EamA domain is found at 40 to 109; it reads LAISLLLLGG…IVAGVMCMGV (70 aa).

The protein belongs to the ArnE family. As to quaternary structure, heterodimer of ArnE and ArnF.

It is found in the cell inner membrane. Its pathway is bacterial outer membrane biogenesis; lipopolysaccharide biosynthesis. Functionally, translocates 4-amino-4-deoxy-L-arabinose-phosphoundecaprenol (alpha-L-Ara4N-phosphoundecaprenol) from the cytoplasmic to the periplasmic side of the inner membrane. In Sodalis glossinidius (strain morsitans), this protein is Probable 4-amino-4-deoxy-L-arabinose-phosphoundecaprenol flippase subunit ArnE.